The chain runs to 153 residues: Bkd operon transcriptional regulator (153 aa).

One can recognise an HTH asnC-type domain in the interval 4–65; sequence LDRIDLKILR…RLDEERLSGA (62 aa). Residues 23–42 constitute a DNA-binding region (H-T-H motif); sequence WRDLAQKVGLSLTPTLRRVR.

Positive regulator of the bkd operon for branched-chain keto acid dehydrogenase complex. The sequence is that of Bkd operon transcriptional regulator (bkdR) from Pseudomonas aeruginosa (strain ATCC 15692 / DSM 22644 / CIP 104116 / JCM 14847 / LMG 12228 / 1C / PRS 101 / PAO1).